A 126-amino-acid polypeptide reads, in one-letter code: 5-hydroxyisourate hydrolase (126 aa).

Substrate is bound by residues H16, R54, and Y123.

Belongs to the transthyretin family. 5-hydroxyisourate hydrolase subfamily. Homotetramer.

The enzyme catalyses 5-hydroxyisourate + H2O = 5-hydroxy-2-oxo-4-ureido-2,5-dihydro-1H-imidazole-5-carboxylate + H(+). In terms of biological role, catalyzes the hydrolysis of 5-hydroxyisourate (HIU) to 2-oxo-4-hydroxy-4-carboxy-5-ureidoimidazoline (OHCU). The chain is 5-hydroxyisourate hydrolase from Pseudomonas aeruginosa (strain ATCC 15692 / DSM 22644 / CIP 104116 / JCM 14847 / LMG 12228 / 1C / PRS 101 / PAO1).